The sequence spans 471 residues: Reticulon-2 (471 aa).

3 disordered regions span residues 1 to 137 (MGQV…ERPL), 153 to 181 (SAGSGEDSATSSSTPLENEEPDGLEASEA), and 205 to 234 (QLSPSSGTPQAHTPSPQRSQDSNSGPDDEP). The span at 14-25 (APSTASSTPDST) shows a compositional bias: low complexity. Residues 32-43 (SDFRELHTAREF) are compositionally biased toward basic and acidic residues. Ser-44 is modified (phosphoserine). 2 stretches are compositionally biased toward polar residues: residues 100–118 (PQQSGLGDSLESIPSLSQS) and 159–168 (DSATSSSTPL). Over residues 169–181 (ENEEPDGLEASEA) the composition is skewed to acidic residues. The segment covering 205–229 (QLSPSSGTPQAHTPSPQRSQDSNSG) has biased composition (polar residues). A phosphoserine mark is found at Ser-226 and Ser-228. One can recognise a Reticulon domain in the interval 272-471 (VADLLYWKDT…SVSGSKAKAE (200 aa)). A run of 2 helical transmembrane segments spans residues 295–315 (LLCLLHFSIVSVAAHLALLGL) and 390–410 (LLFYILTFVGAIFNGLTLVIL).

Interacts with SPAST. Interacts with BACE1. Interacts (via first transmembrane domain) with ARL6IP5/GTRAP3-18. Interacts (via N-terminus) with SLC1A1/EAAC1; the interaction promotes cell surface expression of SLC1A1. In terms of tissue distribution, detected in skeletal and cardiac muscle (at protein level). Expressed predominantly in neural and muscular tissues.

The protein localises to the endoplasmic reticulum membrane. Its subcellular location is the sarcoplasmic reticulum membrane. The protein resides in the cell membrane. It localises to the sarcolemma. It is found in the T-tubule. The protein localises to the cytoplasm. Its subcellular location is the myofibril. The protein resides in the sarcomere. It localises to the z line. It is found in the cytoskeleton. Its function is as follows. Inhibits amyloid precursor protein processing, probably by blocking BACE1 activity. Enhances trafficking of the glutamate transporter SLC1A1/EAAC1 from the endoplasmic reticulum to the cell surface. Plays a role in the translocation of SLC2A4/GLUT4 from intracellular membranes to the cell membrane which facilitates the uptake of glucose into the cell. In Mus musculus (Mouse), this protein is Reticulon-2.